We begin with the raw amino-acid sequence, 295 residues long: UDP-N-acetylenolpyruvoylglucosamine reductase (295 aa).

The FAD-binding PCMH-type domain maps to 23–188 (KVGGPADFLA…ISAKFALKPG (166 aa)). The active site involves Arg-167. The active-site Proton donor is Ser-217. Residue Glu-287 is part of the active site.

This sequence belongs to the MurB family. FAD serves as cofactor.

It localises to the cytoplasm. It carries out the reaction UDP-N-acetyl-alpha-D-muramate + NADP(+) = UDP-N-acetyl-3-O-(1-carboxyvinyl)-alpha-D-glucosamine + NADPH + H(+). It functions in the pathway cell wall biogenesis; peptidoglycan biosynthesis. In terms of biological role, cell wall formation. In Streptococcus pyogenes serotype M1, this protein is UDP-N-acetylenolpyruvoylglucosamine reductase.